Reading from the N-terminus, the 377-residue chain is Pseudouridylate synthase RPUSD4, mitochondrial (377 aa).

A mitochondrion-targeting transit peptide spans 1 to 46 (MAAPCLRTPGVQLLSMSSRPGRLFTPGSWSFCSSATSSRPLNAQRL). The active site involves D153.

This sequence belongs to the pseudouridine synthase RluA family. In terms of assembly, interacts with 16S mt-rRNA, mt-tRNA(Phe) and mt-tRNA(Met). Forms a regulatory protein-RNA complex, consisting of RCC1L, NGRN, RPUSD3, RPUSD4, TRUB2, FASTKD2 and 16S mt-rRNA.

It localises to the mitochondrion matrix. It is found in the nucleus. The protein localises to the cytoplasm. It catalyses the reaction uridine in 5S rRNA = pseudouridine in 5S rRNA. The enzyme catalyses a uridine in tRNA = a pseudouridine in tRNA. The catalysed reaction is a uridine in mRNA = a pseudouridine in mRNA. Catalyzes uridine to pseudouridine isomerization (pseudouridylation) of different mitochondrial RNA substrates. Acts on position 1397 in 16S mitochondrial ribosomal RNA (16S mt-rRNA). This modification is required for the assembly of 16S mt-rRNA into a functional mitochondrial ribosome. As a component of a functional protein-RNA module, consisting of RCC1L, NGRN, RPUSD3, RPUSD4, TRUB2, FASTKD2 and 16S mt-rRNA, controls 16S mt-rRNA abundance and is required for intra-mitochondrial translation. Acts on position 39 in mitochondrial tRNA(Phe). Also catalyzes pseudouridylation of mRNAs in nucleus: acts as a regulator of pre-mRNA splicing by mediating pseudouridylation of pre-mRNAs at locations associated with alternatively spliced regions. Pseudouridylation of pre-mRNAs near splice sites directly regulates mRNA splicing and mRNA 3'-end processing. The protein is Pseudouridylate synthase RPUSD4, mitochondrial of Mus musculus (Mouse).